A 541-amino-acid chain; its full sequence is NAD(P)H-quinone oxidoreductase subunit 2 A, chloroplastic (541 aa).

A run of 14 helical transmembrane segments spans residues 24–44 (LLLF…GLIL), 57–77 (IPWL…ALLF), 99–119 (IFQF…VEYI), 124–144 (MAIT…MFLC), 149–169 (FITI…LSGY), 183–203 (YLLM…WLYG), 227–247 (PGIS…LSPA), 289–309 (ILSP…AASA), 326–346 (WHLL…LIAI), 354–374 (MLAY…IVGD), 385–405 (YMLF…LFGL), 426–446 (ALSL…AGFF), 449–469 (LYLF…IGLL), and 515–535 (MIVC…IIAI).

The protein belongs to the complex I subunit 2 family. As to quaternary structure, NDH is composed of at least 16 different subunits, 5 of which are encoded in the nucleus.

Its subcellular location is the plastid. It is found in the chloroplast thylakoid membrane. The enzyme catalyses a plastoquinone + NADH + (n+1) H(+)(in) = a plastoquinol + NAD(+) + n H(+)(out). It catalyses the reaction a plastoquinone + NADPH + (n+1) H(+)(in) = a plastoquinol + NADP(+) + n H(+)(out). Functionally, NDH shuttles electrons from NAD(P)H:plastoquinone, via FMN and iron-sulfur (Fe-S) centers, to quinones in the photosynthetic chain and possibly in a chloroplast respiratory chain. The immediate electron acceptor for the enzyme in this species is believed to be plastoquinone. Couples the redox reaction to proton translocation, and thus conserves the redox energy in a proton gradient. The protein is NAD(P)H-quinone oxidoreductase subunit 2 A, chloroplastic of Coffea arabica (Arabian coffee).